The chain runs to 83 residues: Cell division topological specificity factor (83 aa).

Belongs to the MinE family.

Its function is as follows. Prevents the cell division inhibition by proteins MinC and MinD at internal division sites while permitting inhibition at polar sites. This ensures cell division at the proper site by restricting the formation of a division septum at the midpoint of the long axis of the cell. In Alcanivorax borkumensis (strain ATCC 700651 / DSM 11573 / NCIMB 13689 / SK2), this protein is Cell division topological specificity factor.